Here is a 379-residue protein sequence, read N- to C-terminus: Protein RecA (379 aa).

79–86 provides a ligand contact to ATP; the sequence is GPESSGKT.

This sequence belongs to the RecA family.

The protein resides in the cytoplasm. Its function is as follows. Can catalyze the hydrolysis of ATP in the presence of single-stranded DNA, the ATP-dependent uptake of single-stranded DNA by duplex DNA, and the ATP-dependent hybridization of homologous single-stranded DNAs. It interacts with LexA causing its activation and leading to its autocatalytic cleavage. This is Protein RecA from Streptococcus agalactiae.